A 371-amino-acid polypeptide reads, in one-letter code: Forkhead box protein J1.2 (371 aa).

Disordered stretches follow at residues Ala-45–Thr-74 and Val-80–Glu-99. A DNA-binding region (fork-head) is located at residues Lys-109–Met-203. The tract at residues Pro-228–Lys-248 is disordered.

The protein belongs to the FOXJ1 family. As to expression, expressed diffusely through much of gastrula and neurula stage embryos. At stage 23 (late neurula), limited to the otic vesicle. By stage 28 (tailbud), also expressed transiently in the presumptive nephrostomes of the pronephros. At stage 35 (early tadpole), expressed broadly in the head and strongly expressed in the developing gill structures.

It localises to the nucleus. Its function is as follows. Key transcription factor required for motile ciliogenesis. Activates genes essential for motile cilia formation and function. This is Forkhead box protein J1.2 from Xenopus tropicalis (Western clawed frog).